Consider the following 351-residue polypeptide: MRFRAELEPLSPYNPPRASQEAAAERGTGGLVKLTSNELSFGPLPEAEAALAEALPRANRYPDRYAAALREAVAAANPGSDVANVLVGNGSSEVLQNLLMLVERPGEVLFPWPTFTLYPSIAGTLGLRARRVPLTEEHRVKPEALLSAVTGETRAVILCNPNNPTGTHLTLEEVSALADALPEDVLLILDEAYQEFVADPAYHGSHALALERPNVAVARTFSKAHGLAGFRVGYGLASREIADYAERVRFPFSVNLAAQVAATASMQAREKIRARAEFVIRERERVERAFREAGLNYVHSQGNFVLVETSPALFERAGVLVREGDPLGYPGWSRVTIGNTQENDLVIGALG.

Positions 1 to 26 (MRFRAELEPLSPYNPPRASQEAAAER) are disordered. Position 223 is an N6-(pyridoxal phosphate)lysine (Lys-223).

The protein belongs to the class-II pyridoxal-phosphate-dependent aminotransferase family. Histidinol-phosphate aminotransferase subfamily. In terms of assembly, homodimer. The cofactor is pyridoxal 5'-phosphate.

The enzyme catalyses L-histidinol phosphate + 2-oxoglutarate = 3-(imidazol-4-yl)-2-oxopropyl phosphate + L-glutamate. It functions in the pathway amino-acid biosynthesis; L-histidine biosynthesis; L-histidine from 5-phospho-alpha-D-ribose 1-diphosphate: step 7/9. This is Histidinol-phosphate aminotransferase from Rubrobacter xylanophilus (strain DSM 9941 / JCM 11954 / NBRC 16129 / PRD-1).